The sequence spans 409 residues: Tyrosine--tRNA ligase (409 aa).

Tyr-39 contacts L-tyrosine. Positions 44–53 match the 'HIGH' region motif; it reads PTAASLHVGS. Positions 176 and 180 each coordinate L-tyrosine. A 'KMSKS' region motif is present at residues 236–240; it reads KMGKT. Position 239 (Lys-239) interacts with ATP. In terms of domain architecture, S4 RNA-binding spans 346–408; sequence ISLVDALVGL…GKKAHGVIQA (63 aa).

It belongs to the class-I aminoacyl-tRNA synthetase family. TyrS type 1 subfamily. Homodimer.

It is found in the cytoplasm. The catalysed reaction is tRNA(Tyr) + L-tyrosine + ATP = L-tyrosyl-tRNA(Tyr) + AMP + diphosphate + H(+). In terms of biological role, catalyzes the attachment of tyrosine to tRNA(Tyr) in a two-step reaction: tyrosine is first activated by ATP to form Tyr-AMP and then transferred to the acceptor end of tRNA(Tyr). The protein is Tyrosine--tRNA ligase of Zymomonas mobilis subsp. mobilis (strain ATCC 31821 / ZM4 / CP4).